The chain runs to 291 residues: Light-independent protochlorophyllide reductase iron-sulfur ATP-binding protein (291 aa).

ATP-binding positions include 10–15 (GIGKST) and lysine 39. Serine 14 lines the Mg(2+) pocket. Residues cysteine 95 and cysteine 129 each contribute to the [4Fe-4S] cluster site. Residue 180-181 (NR) participates in ATP binding.

The protein belongs to the NifH/BchL/ChlL family. As to quaternary structure, homodimer. Protochlorophyllide reductase is composed of three subunits; ChlL, ChlN and ChlB. [4Fe-4S] cluster serves as cofactor.

Its subcellular location is the plastid. It localises to the chloroplast. The catalysed reaction is chlorophyllide a + oxidized 2[4Fe-4S]-[ferredoxin] + 2 ADP + 2 phosphate = protochlorophyllide a + reduced 2[4Fe-4S]-[ferredoxin] + 2 ATP + 2 H2O. The protein operates within porphyrin-containing compound metabolism; chlorophyll biosynthesis (light-independent). Functionally, component of the dark-operative protochlorophyllide reductase (DPOR) that uses Mg-ATP and reduced ferredoxin to reduce ring D of protochlorophyllide (Pchlide) to form chlorophyllide a (Chlide). This reaction is light-independent. The L component serves as a unique electron donor to the NB-component of the complex, and binds Mg-ATP. This Pinus thunbergii (Japanese black pine) protein is Light-independent protochlorophyllide reductase iron-sulfur ATP-binding protein.